We begin with the raw amino-acid sequence, 212 residues long: Protein-L-isoaspartate O-methyltransferase 1 (212 aa).

Residue Ser60 is part of the active site.

This sequence belongs to the methyltransferase superfamily. L-isoaspartyl/D-aspartyl protein methyltransferase family.

It localises to the cytoplasm. The catalysed reaction is [protein]-L-isoaspartate + S-adenosyl-L-methionine = [protein]-L-isoaspartate alpha-methyl ester + S-adenosyl-L-homocysteine. Functionally, catalyzes the methyl esterification of L-isoaspartyl residues in peptides and proteins that result from spontaneous decomposition of normal L-aspartyl and L-asparaginyl residues. It plays a role in the repair and/or degradation of damaged proteins. The protein is Protein-L-isoaspartate O-methyltransferase 1 of Anaeromyxobacter sp. (strain Fw109-5).